Here is an 897-residue protein sequence, read N- to C-terminus: Protein transport protein SEC24-1 (897 aa).

Positions 213, 216, 235, and 238 each coordinate Zn(2+). The interval 213–238 is zinc finger-like; the sequence is CRRCRSYINPFAKFIEQGRRWRCNFC.

This sequence belongs to the SEC23/SEC24 family. SEC24 subfamily. In terms of assembly, the COPII coat is composed of at least 5 proteins: the SEC23/24 complex, the SEC13/31 complex, and the protein SAR1. Golgi apparatus membrane; Peripheral membrane protein; Cytoplasmic side.

It is found in the cytoplasm. The protein resides in the cytoplasmic vesicle. The protein localises to the COPII-coated vesicle membrane. Its subcellular location is the endoplasmic reticulum membrane. It localises to the golgi apparatus membrane. In terms of biological role, component of the coat protein complex II (COPII) which promotes the formation of transport vesicles from the endoplasmic reticulum (ER). The coat has two main functions, the physical deformation of the endoplasmic reticulum membrane into vesicles and the selection of cargo molecules. This is Protein transport protein SEC24-1 (SEC241) from Candida glabrata (strain ATCC 2001 / BCRC 20586 / JCM 3761 / NBRC 0622 / NRRL Y-65 / CBS 138) (Yeast).